A 180-amino-acid polypeptide reads, in one-letter code: Crossover junction endodeoxyribonuclease RuvC (180 aa).

Active-site residues include aspartate 13, glutamate 73, and aspartate 145. Mg(2+) is bound by residues aspartate 13, glutamate 73, and aspartate 145.

This sequence belongs to the RuvC family. Homodimer which binds Holliday junction (HJ) DNA. The HJ becomes 2-fold symmetrical on binding to RuvC with unstacked arms; it has a different conformation from HJ DNA in complex with RuvA. In the full resolvosome a probable DNA-RuvA(4)-RuvB(12)-RuvC(2) complex forms which resolves the HJ. The cofactor is Mg(2+).

Its subcellular location is the cytoplasm. It carries out the reaction Endonucleolytic cleavage at a junction such as a reciprocal single-stranded crossover between two homologous DNA duplexes (Holliday junction).. Its function is as follows. The RuvA-RuvB-RuvC complex processes Holliday junction (HJ) DNA during genetic recombination and DNA repair. Endonuclease that resolves HJ intermediates. Cleaves cruciform DNA by making single-stranded nicks across the HJ at symmetrical positions within the homologous arms, yielding a 5'-phosphate and a 3'-hydroxyl group; requires a central core of homology in the junction. The consensus cleavage sequence is 5'-(A/T)TT(C/G)-3'. Cleavage occurs on the 3'-side of the TT dinucleotide at the point of strand exchange. HJ branch migration catalyzed by RuvA-RuvB allows RuvC to scan DNA until it finds its consensus sequence, where it cleaves and resolves the cruciform DNA. In Magnetococcus marinus (strain ATCC BAA-1437 / JCM 17883 / MC-1), this protein is Crossover junction endodeoxyribonuclease RuvC.